The sequence spans 1075 residues: MRLDENEGAFTIPEFGKIQFEGFCRFIDQGLMEELHNFPKIEDIDKEIEFRLFGNEYELAEPFIKERDAVYQSLTYYSELYVPARSIRRNSRKIQKQTVFLGNIPLMNSHGTFVVNGIYRVVVNQILISPGIYYRSELDHNRINYIYTGTLISDWGRRSKLEIDVGERIWARVSRKQKISIPVLLSAMGLNLEEILDNTRYPERFLFLLKKKGRWEREEYLWSREKAILEFYKKLYCISGDLVFSESLCKELQKKFFRKRCELGKIGRRNLNQKLNLDIPENEIFSLPQDVLAAVDYLIGVKFGMGTLDDIDHLRNRRIRSVADLLQNQFRLALGRLEDAVKRTIRRATKRRSTPQNLVTSTLLKNTFQDFFGSHPLSQFLDQTNPLTEIAHGRKLSHLGPGGLTGRTASFRTRDIHPSYYGRICPIDTSEGMNAGLVASLSIHAKIGDCGSLQSPFYKISERSREEHMVYLLPGEDEDEYYRIATGNSLALNQGIQEEQITPARYRQEFIVIAWEQIHFRSIFPFQYFSVGVSLIPFLEHNDANRALMGSNMQRQAVPLFRPEKCIAGTGLEGQAALDSGSVAIATQEGRIEYIDAVNITSSVNGDTVRTESVIYQRSNTNTCTHQKPQIHQGECVKKGQILADGATTVGGELSLGKNVLVAYMPWEGYNFEDAILISERLVYEDIYTSFHIVRYRIEICMTSQGPERITREIPHLDAHLLRHLDENGLVMLGSWIETGDVLVGKLTPQTIEESLCTPEGRLLQTIFGIEVSTARENCLRAPIGGRGRVIDVRWINRVDDSGDNAETVHVYISQKRKIQVGDKVSGRHGNKGIISIVLPRQDMPYLQNGIPVDMVLNPLGVPSRMNVGQIFECLPGLAGNPMNKHYRITPFDEKYEREASRKLVFPELYKASEQTANPWVFEPDHPGKHRLIDGRTGDVFEQPVTIGKAYMSKLSHQVDEKIHARSSGPYARVTQQPLRGKSKRGGQRIGEMEVWALEGFGVAYILQEMLTLKSDHIRTRNEVLGAIITGGPIPKPDTAPESFRLLIRELRSLALELNHAIISEKNFQIDREEV.

Belongs to the RNA polymerase beta chain family. In plastids the minimal PEP RNA polymerase catalytic core is composed of four subunits: alpha, beta, beta', and beta''. When a (nuclear-encoded) sigma factor is associated with the core the holoenzyme is formed, which can initiate transcription.

It localises to the plastid. It is found in the chloroplast. The enzyme catalyses RNA(n) + a ribonucleoside 5'-triphosphate = RNA(n+1) + diphosphate. DNA-dependent RNA polymerase catalyzes the transcription of DNA into RNA using the four ribonucleoside triphosphates as substrates. The sequence is that of DNA-directed RNA polymerase subunit beta from Pinus thunbergii (Japanese black pine).